We begin with the raw amino-acid sequence, 270 residues long: Formamidopyrimidine-DNA glycosylase (270 aa).

Proline 2 functions as the Schiff-base intermediate with DNA in the catalytic mechanism. Glutamate 3 functions as the Proton donor in the catalytic mechanism. Residue lysine 58 is the Proton donor; for beta-elimination activity of the active site. The DNA site is built by histidine 91, arginine 110, and arginine 151. An FPG-type zinc finger spans residues phenylalanine 236–serine 270. Arginine 260 (proton donor; for delta-elimination activity) is an active-site residue.

It belongs to the FPG family. Monomer. Requires Zn(2+) as cofactor.

It catalyses the reaction Hydrolysis of DNA containing ring-opened 7-methylguanine residues, releasing 2,6-diamino-4-hydroxy-5-(N-methyl)formamidopyrimidine.. It carries out the reaction 2'-deoxyribonucleotide-(2'-deoxyribose 5'-phosphate)-2'-deoxyribonucleotide-DNA = a 3'-end 2'-deoxyribonucleotide-(2,3-dehydro-2,3-deoxyribose 5'-phosphate)-DNA + a 5'-end 5'-phospho-2'-deoxyribonucleoside-DNA + H(+). Its function is as follows. Involved in base excision repair of DNA damaged by oxidation or by mutagenic agents. Acts as a DNA glycosylase that recognizes and removes damaged bases. Has a preference for oxidized purines, such as 7,8-dihydro-8-oxoguanine (8-oxoG). Has AP (apurinic/apyrimidinic) lyase activity and introduces nicks in the DNA strand. Cleaves the DNA backbone by beta-delta elimination to generate a single-strand break at the site of the removed base with both 3'- and 5'-phosphates. The polypeptide is Formamidopyrimidine-DNA glycosylase (Pseudomonas fluorescens (strain ATCC BAA-477 / NRRL B-23932 / Pf-5)).